A 204-amino-acid chain; its full sequence is Casparian strip membrane protein 2 (204 aa).

Residues 1–42 (MKNESTTIDVPAESSSAMKGKAPLIGVARDHTTSGSGGYNRG) lie on the Cytoplasmic side of the membrane. A helical transmembrane segment spans residues 43 to 63 (LSIFDFLLRLAAIVAALAAAA). Over 64-92 (TMGTSDETLPFFTQFLQFEASYDDLPTFQ) the chain is Extracellular. A helical transmembrane segment spans residues 93–113 (FFVIAMALVGGYLVLSLPISV). Residues 114-125 (VTILRPLATAPR) lie on the Cytoplasmic side of the membrane. A helical transmembrane segment spans residues 126-146 (LLLLVLDTAVLALNTAAASSA). Over 147-178 (AAISYLAHSGNQNTNWLPICQQFGDFCQKSSG) the chain is Extracellular. The helical transmembrane segment at 179–199 (AVVSAFISVVFFTILVVISGV) threads the bilayer. At 200 to 204 (ALKRH) the chain is on the cytoplasmic side.

This sequence belongs to the Casparian strip membrane proteins (CASP) family. In terms of assembly, homodimer and heterodimers.

The protein localises to the cell membrane. In terms of biological role, regulates membrane-cell wall junctions and localized cell wall deposition. Required for establishment of the Casparian strip membrane domain (CSD) and the subsequent formation of Casparian strips, a cell wall modification of the root endodermis that determines an apoplastic barrier between the intraorganismal apoplasm and the extraorganismal apoplasm and prevents lateral diffusion. This Arabidopsis lyrata subsp. lyrata (Lyre-leaved rock-cress) protein is Casparian strip membrane protein 2.